The sequence spans 147 residues: Protein SOB FIVE-LIKE 2 (147 aa).

The short motif at 18–23 is the SOFL-A element; it reads SGWTMY. The tract at residues 32 to 147 is disordered; that stretch reads HHSEVVYEEE…ASRVKVSKTK (116 aa). The span at 37-77 shows a compositional bias: acidic residues; the sequence is VYEEEDDGFSVKEVDDDGDGDEDDDDDDDDDSSNNESDDSM. The SOFL-B motif lies at 76–85; sequence SMTSDASSWP. Residues 78–93 are compositionally biased toward polar residues; it reads TSDASSWPSTHQPPRS. The span at 96 to 106 shows a compositional bias: low complexity; that stretch reads NHAAAKNSNAK. The span at 114–131 shows a compositional bias: basic and acidic residues; it reads NRVRDRFSDEGEESELKA.

Belongs to the SOFL plant protein family. In terms of tissue distribution, predominantly expressed in the vascular tissues of seedlings, developing leaves, flowers and siliques, but barely detectable in roots and stems.

The protein resides in the cytoplasm. It localises to the nucleus. Functionally, involved in cytokinin-mediated development. Together with SOFL2, triggers the endogenous content of specific bioactive cytokinins derived from the biosynthetic intermediates trans-zeatin riboside monophosphate (tZRMP) and N(6)-(Delta(2)-isopentenyl)adenosine monophosphate (iPRMP) such as N-glucosides trans-zeatin 7-glucoside (tZ7G), cis-zeatin 7-glucoside (cZ7G) and N(6)-(Delta(2)-isopentenyl)adenine 7-glucoside (iP7G). The sequence is that of Protein SOB FIVE-LIKE 2 from Arabidopsis thaliana (Mouse-ear cress).